The sequence spans 255 residues: tRNA (guanine-N(1)-)-methyltransferase (255 aa).

S-adenosyl-L-methionine is bound by residues glycine 114 and 134–139; that span reads IGDYIL.

The protein belongs to the RNA methyltransferase TrmD family. As to quaternary structure, homodimer.

It localises to the cytoplasm. It carries out the reaction guanosine(37) in tRNA + S-adenosyl-L-methionine = N(1)-methylguanosine(37) in tRNA + S-adenosyl-L-homocysteine + H(+). Its function is as follows. Specifically methylates guanosine-37 in various tRNAs. The sequence is that of tRNA (guanine-N(1)-)-methyltransferase from Blochmanniella pennsylvanica (strain BPEN).